The chain runs to 327 residues: Gonadotropin-releasing hormone receptor (327 aa).

At 1 to 38 the chain is on the extracellular side; that stretch reads MANNASLEQDQNHCSAINNSIPLTQGKLPTLTLSGKIR. N-linked (GlcNAc...) asparagine glycosylation is found at Asn-4 and Asn-18. The helical transmembrane segment at 39–58 threads the bilayer; sequence VTVTFFLFLLSTAFNASFLV. Residues 59 to 77 lie on the Cytoplasmic side of the membrane; sequence KLQRWTQKRKKGKKLSRMK. A helical transmembrane segment spans residues 78-97; it reads VLLKHLTLANLLETLIVMPL. Topologically, residues 98-115 are extracellular; sequence DGMWNITVQWYAGEFLCK. N-linked (GlcNAc...) asparagine glycosylation is present at Asn-102. A disulfide bridge links Cys-114 with Cys-195. A helical transmembrane segment spans residues 116–137; it reads VLSYLKLFSMYAPAFMMVVISL. At 138-164 the chain is on the cytoplasmic side; it reads DRSLAVTQPLAVQSKSKLERSMTSLAW. Residues 165-184 form a helical membrane-spanning segment; the sequence is ILSIVFAGPQLYIFRMIYLA. At 185–211 the chain is on the extracellular side; it reads DGSGPAVFSQCVTHCSFPQWWHEAFYN. Residues 212 to 231 traverse the membrane as a helical segment; the sequence is FFTFSCLFIIPLLIMLICNA. Topologically, residues 232–280 are cytoplasmic; sequence KIIFALTRVLHQDPRKLQLNQSKNNIPRARLRTLKMTVAFGTSFVICWT. Residues 281–299 form a helical membrane-spanning segment; that stretch reads PYYVLGIWYWFDPEMLNRV. At 300–305 the chain is on the extracellular side; it reads SEPVNH. Residues 306 to 325 traverse the membrane as a helical segment; that stretch reads FFFLFAFLNPCFDPLIYGYF. The Cytoplasmic segment spans residues 326–327; sequence SL.

It belongs to the G-protein coupled receptor 1 family.

The protein resides in the cell membrane. In terms of biological role, receptor for gonadotropin releasing hormone (GnRH) that mediates the action of GnRH to stimulate the secretion of the gonadotropic hormones luteinizing hormone (LH) and follicle-stimulating hormone (FSH). This receptor mediates its action by association with G-proteins that activate a phosphatidylinositol-calcium second messenger system. This is Gonadotropin-releasing hormone receptor (Gnrhr) from Rattus norvegicus (Rat).